A 1322-amino-acid chain; its full sequence is Serine/threonine-protein phosphatase UIS2 (1322 aa).

Residues Met1 to Asn22 form the signal peptide. Positions Met1 to Met535 are interaction with phosphorylated eIF2alpha. 2 stretches are compositionally biased toward basic and acidic residues: residues Glu267–Asn279 and Asn288–Asn326. Disordered stretches follow at residues Glu267–Asn326, Asn613–Asn646, Asn1066–Asn1087, and Glu1170–Asp1196. Positions Asn631–Asn646 are enriched in low complexity.

It depends on Mn(2+) as a cofactor.

The catalysed reaction is O-phospho-L-seryl-[protein] + H2O = L-seryl-[protein] + phosphate. Functionally, protein phosphatase which dephosphorylates 'Ser-59' of translation factor eIF2alpha during the liver stage, thus enabling protein translation. The protein is Serine/threonine-protein phosphatase UIS2 of Plasmodium berghei (strain Anka).